We begin with the raw amino-acid sequence, 308 residues long: Aspartate carbamoyltransferase catalytic subunit (308 aa).

Carbamoyl phosphate-binding residues include Arg-57 and Thr-58. An L-aspartate-binding site is contributed by Lys-86. Carbamoyl phosphate is bound by residues Arg-107, His-135, and Gln-138. L-aspartate is bound by residues Arg-168 and Arg-229. 2 residues coordinate carbamoyl phosphate: Leu-268 and Pro-269.

It belongs to the aspartate/ornithine carbamoyltransferase superfamily. ATCase family. In terms of assembly, heterooligomer of catalytic and regulatory chains.

The enzyme catalyses carbamoyl phosphate + L-aspartate = N-carbamoyl-L-aspartate + phosphate + H(+). The protein operates within pyrimidine metabolism; UMP biosynthesis via de novo pathway; (S)-dihydroorotate from bicarbonate: step 2/3. Functionally, catalyzes the condensation of carbamoyl phosphate and aspartate to form carbamoyl aspartate and inorganic phosphate, the committed step in the de novo pyrimidine nucleotide biosynthesis pathway. This is Aspartate carbamoyltransferase catalytic subunit from Pyrococcus horikoshii (strain ATCC 700860 / DSM 12428 / JCM 9974 / NBRC 100139 / OT-3).